Consider the following 169-residue polypeptide: Regulator of sigma D (169 aa).

The protein belongs to the Rsd/AlgQ family. As to quaternary structure, interacts with RpoD.

It localises to the cytoplasm. Binds RpoD and negatively regulates RpoD-mediated transcription activation by preventing the interaction between the primary sigma factor RpoD with the catalytic core of the RNA polymerase and with promoter DNA. May be involved in replacement of the RNA polymerase sigma subunit from RpoD to RpoS during the transition from exponential growth to the stationary phase. This is Regulator of sigma D from Yersinia pestis.